A 500-amino-acid polypeptide reads, in one-letter code: Cytochrome P450 2D3 (500 aa).

Cysteine 446 provides a ligand contact to heme.

Belongs to the cytochrome P450 family. Requires heme as cofactor.

It localises to the endoplasmic reticulum membrane. It is found in the microsome membrane. It carries out the reaction an organic molecule + reduced [NADPH--hemoprotein reductase] + O2 = an alcohol + oxidized [NADPH--hemoprotein reductase] + H2O + H(+). Functionally, cytochromes P450 are a group of heme-thiolate monooxygenases. In liver microsomes, this enzyme is involved in an NADPH-dependent electron transport pathway. It oxidizes a variety of structurally unrelated compounds, including steroids, fatty acids, and xenobiotics. This is Cytochrome P450 2D3 (Cyp2d3) from Rattus norvegicus (Rat).